A 571-amino-acid chain; its full sequence is Fumarate reductase (cytochrome) (571 aa).

Heme c contacts are provided by H8, C14, C17, H18, C36, C39, H40, H52, H58, H61, C68, C71, H72, A74, H75, C82, C85, H86, N91, and Y94. The flavoprotein-like stretch occupies residues 118 to 571 (ALASAPHDTV…EEAAKYSKKN (454 aa)). Residues A137, E156, N164, A165, A169, G170, G171, G278, and Q338 each contribute to the FAD site. G170 is a binding site for succinate. Succinate is bound by residues H365, T377, and E378. Fumarate is bound by residues T377, E378, and R402. R402 (proton donor) is an active-site residue. Residue K431 participates in heme c binding. Succinate is bound at residue H504. H504 provides a ligand contact to fumarate. FAD is bound by residues H505 and E534. Succinate is bound by residues R544 and G547. Fumarate is bound by residues R544 and G547. 2 residues coordinate FAD: A549 and I550.

In terms of assembly, monomer. FAD is required as a cofactor. Requires heme c as cofactor.

The protein resides in the periplasm. The enzyme catalyses 2 Fe(III)-[cytochrome c] + succinate = fumarate + 2 Fe(II)-[cytochrome c] + 2 H(+). Flavocytochrome that catalyzes the reduction of fumarate to succinate. Is essential for fumarate respiration during anaerobic growth, acting as the terminal reductase. Receives electrons from the membrane-bound tetraheme c-type cytochrome CymA. In vitro, can use the artificial electron donor methyl viologen. In Shewanella frigidimarina, this protein is Fumarate reductase (cytochrome) (fccA).